The following is a 1170-amino-acid chain: Glucose transport transcription regulator RGT1 (1170 aa).

The span at 1–22 (MNELNTVSTNSSDSTKDGGTSN) shows a compositional bias: polar residues. Disordered regions lie at residues 1 to 47 (MNEL…SRAC) and 77 to 149 (SFDR…SNSV). The zn(2)-C6 fungal-type DNA-binding region spans 47-76 (CDQCRKKKIKCDYKDEKGVCSNCQRNGDRC). Basic and acidic residues predominate over residues 99–108 (RTNEIQDHNN). Residues 113 to 138 (NTFDNSNNTLNNNTGNSGDNGINSNT) are compositionally biased toward low complexity. Over residues 139–149 (VPSTPSRSNSV) the composition is skewed to polar residues. 4 positions are modified to phosphoserine: S202, S205, S208, and S229. Disordered stretches follow at residues 226–254 (VQQS…SASG), 269–288 (APTD…IPSL), 293–323 (SNSL…LQQG), 384–506 (AQQT…HPMT), and 944–977 (NYRP…SAAP). A compositionally biased stretch (low complexity) spans 239 to 250 (SGNANGSVTGSG). The segment covering 271-280 (TDDHNGEQTR) has biased composition (basic and acidic residues). 2 positions are modified to phosphoserine: S283 and S284. 3 stretches are compositionally biased toward low complexity: residues 293 to 302 (SNSLLLGGQP), 309 to 323 (QQSQ…LQQG), and 385 to 397 (QQTQ…QVPQ). 2 positions are modified to phosphoserine: S410 and S414. Polar residues predominate over residues 411 to 422 (APVSVTLSTDRL). Residues 424–444 (GNENNNGEINNNNGSNNSGSS) are compositionally biased toward low complexity. Polar residues predominate over residues 445–457 (KDTSQHSQESVTT). Residues 473-488 (STKKRRKSYVSKKTKP) show a composition bias toward basic residues. Residues 493-506 (SISITSKDSAHPMT) are compositionally biased toward polar residues. Phosphoserine is present on S1130.

The protein belongs to the EDS1/RGT1 family. In terms of processing, glucose-induced phosphorylation regulates the DNA-binding activity. Hyperphosphorylation in cells growing on high levels of glucose does prevents DNA-binding and dephosphorylation restores DNA-binding ability.

Its subcellular location is the nucleus. It is found in the cytoplasm. In terms of biological role, glucose-responsive transcription factor that regulates expression of several glucose transporter (HXT) genes in response to glucose. In the absence of glucose, it functions as a transcriptional repressor, whereas high concentrations of glucose cause it to function as a transcriptional activator. In cells growing on low levels of glucose, has a neutral role, neither repressing nor activating transcription. Binds the consensus binding site sequence 5'-CGGANNA-3', of which multiple copies are present in all HXT promoters regulated by RGT1. The polypeptide is Glucose transport transcription regulator RGT1 (RGT1) (Saccharomyces cerevisiae (strain JAY291) (Baker's yeast)).